We begin with the raw amino-acid sequence, 787 residues long: ER degradation-enhancing alpha-mannosidase-like protein 1 (787 aa).

The first 22 residues, 1–22 (MGSLHSIFCVCLILLCIFKENS), serve as a signal peptide directing secretion. N-linked (GlcNAc...) asparagine glycosylation is found at Asn-479, Asn-609, Asn-670, Asn-693, and Asn-756.

The protein belongs to the glycosyl hydrolase 47 family.

It is found in the endoplasmic reticulum lumen. Alpha-mannosidase-like protein involved in endoplasmic reticulum-associated degradation (ERAD). Delivers misfolded glycoproteins to proteasomes. It lacks mannosidase activity. The polypeptide is ER degradation-enhancing alpha-mannosidase-like protein 1 (mnl1) (Schizosaccharomyces pombe (strain 972 / ATCC 24843) (Fission yeast)).